The chain runs to 466 residues: ATP synthase subunit beta (466 aa).

156–163 (GGAGVGKT) contributes to the ATP binding site.

The protein belongs to the ATPase alpha/beta chains family. In terms of assembly, F-type ATPases have 2 components, CF(1) - the catalytic core - and CF(0) - the membrane proton channel. CF(1) has five subunits: alpha(3), beta(3), gamma(1), delta(1), epsilon(1). CF(0) has three main subunits: a(1), b(2) and c(9-12). The alpha and beta chains form an alternating ring which encloses part of the gamma chain. CF(1) is attached to CF(0) by a central stalk formed by the gamma and epsilon chains, while a peripheral stalk is formed by the delta and b chains.

It is found in the cell inner membrane. The enzyme catalyses ATP + H2O + 4 H(+)(in) = ADP + phosphate + 5 H(+)(out). In terms of biological role, produces ATP from ADP in the presence of a proton gradient across the membrane. The catalytic sites are hosted primarily by the beta subunits. The sequence is that of ATP synthase subunit beta from Dechloromonas aromatica (strain RCB).